The sequence spans 86 residues: Small ribosomal subunit protein bS16 (86 aa).

It belongs to the bacterial ribosomal protein bS16 family.

The polypeptide is Small ribosomal subunit protein bS16 (Methylibium petroleiphilum (strain ATCC BAA-1232 / LMG 22953 / PM1)).